Here is a 277-residue protein sequence, read N- to C-terminus: Phosphatidylglycerol--prolipoprotein diacylglyceryl transferase (277 aa).

The next 4 helical transmembrane spans lie at 15 to 35 (IHVRWYGIIIACGILLATFMS), 50 to 70 (IDLLLWGVPIGFIGARIYYVI), 89 to 109 (GGIAIYGGLIAGAIVLLVFCY), and 112 to 132 (FLPPFLVLDIVAPGVMAAQVL). Residue R134 participates in a 1,2-diacyl-sn-glycero-3-phospho-(1'-sn-glycerol) binding. The next 3 helical transmembrane spans lie at 174 to 194 (KPTFLYESFFNLIGLIIILSL), 204 to 224 (GEVFMLYLAWYSVVRFFVEGM), and 234 to 254 (VIRVSQALSLLLLIAVVILFV).

Belongs to the Lgt family.

The protein localises to the cell membrane. It catalyses the reaction L-cysteinyl-[prolipoprotein] + a 1,2-diacyl-sn-glycero-3-phospho-(1'-sn-glycerol) = an S-1,2-diacyl-sn-glyceryl-L-cysteinyl-[prolipoprotein] + sn-glycerol 1-phosphate + H(+). It functions in the pathway protein modification; lipoprotein biosynthesis (diacylglyceryl transfer). Catalyzes the transfer of the diacylglyceryl group from phosphatidylglycerol to the sulfhydryl group of the N-terminal cysteine of a prolipoprotein, the first step in the formation of mature lipoproteins. This chain is Phosphatidylglycerol--prolipoprotein diacylglyceryl transferase, found in Lactobacillus delbrueckii subsp. bulgaricus (strain ATCC 11842 / DSM 20081 / BCRC 10696 / JCM 1002 / NBRC 13953 / NCIMB 11778 / NCTC 12712 / WDCM 00102 / Lb 14).